A 460-amino-acid chain; its full sequence is MKKIIIALFFAPFFTHATTDAECLSKPAFDGTLSNVWKEGDSRYANFENCIYELSGIGIGYDNDTSCNGHWTPVRAADGSGNGGDDNSSGGGSNGDSGNNSTPDTVTPGQTVNLPSDLSTLSIPANVVKSDSIGSQFSLYTNASCTMCSGYYLSNNADSIAIANITETVKADYNQPDMWFEQTDSDGNHVKILQNSYKAVSYNVESKQSDVNNPTYINYSYSVNVKQVSYDTSNVCIMNWETFQNKCDASRAVLITDTVTPSYSRNITIQSNINYQGSNGSGGSGGSGGSGNDGGGTGNNGNGTGDFDYVKMANANKDALTESFDLSALQADTGASLDGSVQGTLDSLSGFSDSIGGLVGNGSAISGEFAGSSAAMNAIGEGDKSPLLDSLSFLKDGLFPALPEFKQCTPFVFAPGKEYEFIIECKYIDMFKGIFAFILYFWTFVTVYDSFSGILRKGRG.

The N-terminal stretch at M1–H16 is a signal peptide. An N1 region spans residues T18–G79. Cysteines 23 and 50 form a disulfide. The interval A76 to P115 is disordered. A compositionally biased stretch (gly residues) spans S80–G95. The interval S80–N100 is G1 (Gly-rich linker). Positions T102 to P115 are enriched in polar residues. Residues D184–A249 are N2. The segment at G277–N300 is disordered. The span at N279–N300 shows a compositional bias: gly residues. The segment at D306–G460 is CT. A helical membrane pass occupies residues I434–I454.

Belongs to the inovirus G3P protein family. Interacts with G6P; this interaction is required for proper integration of G3P and G6P into the virion. Interacts with G8P. Interacts with the tip of the host pilus. Interacts (via N-terminus) with host TolA.

The protein resides in the virion. The protein localises to the host membrane. Its function is as follows. Plays essential roles both in the penetration of the viral genome into the bacterial host via pilus retraction and in the extrusion process. During the initial step of infection, G3P mediates adsorption of the phage to its primary receptor, the tip of host I-pilus. Attachment of the phage causes pilus retraction bringing the viral particle into close proximity of the host cell inner membrane. Subsequent interaction with the host entry receptors TolA and penetration of the viral DNA into the host cytoplasm. In the extrusion process, G3P mediates the release of the membrane-anchored virion from the cell via its C-terminal domain. The protein is Attachment protein G3P (III) of Escherichia coli (Bacteriophage If1).